Here is a 270-residue protein sequence, read N- to C-terminus: MAKVPDLFEDLKNCYSENEEYSSAIDHLSLNQKSFYDASYGSLHENCTDKFVSLRTSETSKMSTFTFKESRVVVSATSNKGKILKKRRLSFNQPFTEDDLEAIAHDLEETIQPRSAPHSFQNNLRYKLIRIVKQEFIMNDSLNQNIYVDMDRIHLKAASLNDLQLEVKFDMYAYSSGGDDSKYPVTLKVSNTQLFVSAQGEDKPVLLKEIPETPKLITGSETDLIFFWEKINSKNYFTSAAFPELLIATKEQSQVHLARGLPSMIDFQIS.

The propeptide occupies 1-114 (MAKVPDLFED…HDLEETIQPR (114 aa)). N-linked (GlcNAc...) asparagine glycosylation is present at Asn-46. N6-acetyllysine is present on Lys-85. Positions 85–89 (KKRRL) are nuclear localization signal (NLS). Residue Ser-90 is modified to Phosphoserine. A glycan (N-linked (GlcNAc...) asparagine) is linked at Asn-139.

This sequence belongs to the IL-1 family. As to quaternary structure, monomer. Interacts with TMED10; the interaction mediates the translocation from the cytoplasm into the ERGIC (endoplasmic reticulum-Golgi intermediate compartment) and thereby secretion. Interacts with IL1R1. Interacts with S100A13; this interaction is the first step in the export of IL1A, followed by direct translocation of this complex across the plasma membrane. Post-translationally, acetylated within its nuclear localization sequence, which impacts subcellular localization. In terms of processing, proteolytic processed by CAPN1 in a calcium-dependent manner. Cleavage from 31 kDa precursor to 18 kDa biologically active molecules. Phosphorylated. Phosphorylation greatly enhances susceptibility to digestion and promotes the conversion of pre-IL1A alpha to the biologically active IL1A.

It is found in the nucleus. The protein localises to the cytoplasm. It localises to the secreted. In terms of biological role, cytokine constitutively present intracellularly in nearly all resting non-hematopoietic cells that plays an important role in inflammation and bridges the innate and adaptive immune systems. After binding to its receptor IL1R1 together with its accessory protein IL1RAP, forms the high affinity interleukin-1 receptor complex. Signaling involves the recruitment of adapter molecules such as MYD88, IRAK1 or IRAK4. In turn, mediates the activation of NF-kappa-B and the three MAPK pathways p38, p42/p44 and JNK pathways. Within the cell, acts as an alarmin and cell death results in its liberation in the extracellular space after disruption of the cell membrane to induce inflammation and alert the host to injury or damage. In addition to its role as a danger signal, which occurs when the cytokine is passively released by cell necrosis, directly senses DNA damage and acts as signal for genotoxic stress without loss of cell integrity. The sequence is that of Interleukin-1 alpha from Rattus norvegicus (Rat).